A 76-amino-acid polypeptide reads, in one-letter code: Histone acetyltransferase (76 aa).

As to quaternary structure, physically interacts with histone H3 in infected macrophages.

The protein localises to the secreted. It localises to the host cytoplasm. The protein resides in the host nucleus. The catalysed reaction is L-lysyl-[protein] + acetyl-CoA = N(6)-acetyl-L-lysyl-[protein] + CoA + H(+). Is completely inhibited by anacardic acid, an inhibitor of HAT activity. Its function is as follows. Histone acetyltransferase, which by binding to the host chromatin, may manipulate the expression of host genes involved in anti-inflammatory responses to evade clearance and to survive in the intracellular milieu. Acetylates histone H3 at the 'Lys-9' and 'Lys-14' positions. The sequence is that of Histone acetyltransferase from Mycobacterium tuberculosis (strain CDC 1551 / Oshkosh).